Here is a 163-residue protein sequence, read N- to C-terminus: Large ribosomal subunit protein eL24y (163 aa).

The segment covering 119-133 (IKKTKDEKKAKKVEF) has biased composition (basic and acidic residues). Residues 119 to 163 (IKKTKDEKKAKKVEFASKQQKVKANFPKAAAASKGPKVGGGGGKR) form a disordered region.

This sequence belongs to the eukaryotic ribosomal protein eL24 family. As to quaternary structure, interacts with REIL1 and REIL2. Component of the large ribosomal subunit. Ubiquitous.

It localises to the cytoplasm. It is found in the nucleus. The protein resides in the nucleolus. The protein localises to the nucleoplasm. Might have an extraribosomal function in reinitiation of translation of ETTIN and MONOPTEROS genes that are involved in the auxin-mediated gynoecium patterning. Essential in leaf polarity establishment, probably having a role for translation in leaf dorsoventral patterning to specify leaf adaxial identity. This Arabidopsis thaliana (Mouse-ear cress) protein is Large ribosomal subunit protein eL24y.